The sequence spans 378 residues: Outer membrane porin C (378 aa).

An N-terminal signal peptide occupies residues 1–21 (MKVKVLSLLVPALLVAGAANA).

The protein belongs to the Gram-negative porin family. Homotrimer.

It is found in the cell outer membrane. Forms pores that allow passive diffusion of small molecules across the outer membrane. This Salmonella typhimurium (strain LT2 / SGSC1412 / ATCC 700720) protein is Outer membrane porin C (ompC).